We begin with the raw amino-acid sequence, 246 residues long: 1-(5-phosphoribosyl)-5-[(5-phosphoribosylamino)methylideneamino] imidazole-4-carboxamide isomerase (246 aa).

The active-site Proton acceptor is Asp-7. Catalysis depends on Asp-130, which acts as the Proton donor.

Belongs to the HisA/HisF family.

It localises to the cytoplasm. The enzyme catalyses 1-(5-phospho-beta-D-ribosyl)-5-[(5-phospho-beta-D-ribosylamino)methylideneamino]imidazole-4-carboxamide = 5-[(5-phospho-1-deoxy-D-ribulos-1-ylimino)methylamino]-1-(5-phospho-beta-D-ribosyl)imidazole-4-carboxamide. It functions in the pathway amino-acid biosynthesis; L-histidine biosynthesis; L-histidine from 5-phospho-alpha-D-ribose 1-diphosphate: step 4/9. This chain is 1-(5-phosphoribosyl)-5-[(5-phosphoribosylamino)methylideneamino] imidazole-4-carboxamide isomerase, found in Blochmanniella pennsylvanica (strain BPEN).